The chain runs to 233 residues: V-type proton ATPase subunit E (233 aa).

The protein belongs to the V-ATPase E subunit family. V-ATPase is a heteromultimeric enzyme composed of a peripheral catalytic V1 complex (components A to H) attached to an integral membrane V0 proton pore complex (components: a, c, c', c'' and d).

Subunit of the peripheral V1 complex of vacuolar ATPase essential for assembly or catalytic function. V-ATPase is responsible for acidifying a variety of intracellular compartments in eukaryotic cells. The protein is V-type proton ATPase subunit E (vatE) of Dictyostelium discoideum (Social amoeba).